Consider the following 330-residue polypeptide: Geranylgeranyl diphosphate synthase (330 aa).

Lys-43, Arg-46, and His-75 together coordinate isopentenyl diphosphate. Mg(2+)-binding residues include Asp-82 and Asp-86. Arg-91 lines the an all-trans-polyprenyl diphosphate pocket. Arg-92 contributes to the isopentenyl diphosphate binding site. An all-trans-polyprenyl diphosphate is bound by residues Lys-175, Thr-176, Gln-213, Lys-230, and Lys-240.

Belongs to the FPP/GGPP synthase family. Mg(2+) serves as cofactor.

The enzyme catalyses isopentenyl diphosphate + (2E,6E)-farnesyl diphosphate = (2E,6E,10E)-geranylgeranyl diphosphate + diphosphate. It participates in isoprenoid biosynthesis; geranylgeranyl diphosphate biosynthesis; geranylgeranyl diphosphate from farnesyl diphosphate and isopentenyl diphosphate: step 1/1. In terms of biological role, catalyzes the condensation of isopentenyl pyrophosphate with the allylic pyrophosphates to yield geranylgeranyl diphosphate (GGPP) which is a precursor of the ether-linked lipids. It is able to use dimethylallyl diphosphate (DMAPP), geranyl diphosphate (GPP), and (all-E)-geranyl diphosphate (E-FPP) as an allylic substrate. The polypeptide is Geranylgeranyl diphosphate synthase (gds) (Sulfolobus acidocaldarius (strain ATCC 33909 / DSM 639 / JCM 8929 / NBRC 15157 / NCIMB 11770)).